A 326-amino-acid polypeptide reads, in one-letter code: Nicotianamine synthase 2 (326 aa).

This sequence belongs to the nicotianamine synthase (NAS)-like family. Expressed in roots.

The enzyme catalyses 3 S-adenosyl-L-methionine = nicotianamine + 3 S-methyl-5'-thioadenosine + 3 H(+). Functionally, synthesizes nicotianamine, a polyamine that is the first intermediate in the synthesis of the phytosiderophores of the mugineic acid type found in gramineae which serve as a sensor for the physiological iron status within the plant, and/or might be involved in the transport of iron. In Oryza sativa subsp. indica (Rice), this protein is Nicotianamine synthase 2 (NAS2).